The primary structure comprises 367 residues: Heat-inducible transcription repressor HrcA (367 aa).

Belongs to the HrcA family.

Its function is as follows. Negative regulator of class I heat shock genes (grpE-dnaK-dnaJ and groELS operons). Prevents heat-shock induction of these operons. In Acaryochloris marina (strain MBIC 11017), this protein is Heat-inducible transcription repressor HrcA.